Reading from the N-terminus, the 85-residue chain is Alpha-conotoxin Lt28.1 (85 aa).

Residues 1–21 (MPKLEMMLLVLLILPLCYIDA) form the signal peptide. A propeptide spanning residues 22–40 (VGPPPPWNMEDEIIEHWQK) is cleaved from the precursor. 4 disulfide bridges follow: Cys61–Cys74, Cys66–Cys84, Cys67–Cys79, and Cys72–Cys81.

The protein belongs to the conotoxin D superfamily. As to expression, expressed by the venom duct.

It localises to the secreted. In terms of biological role, alpha-conotoxins act on postsynaptic membranes, they bind to the nicotinic acetylcholine receptors (nAChR) and thus inhibit them. This toxin weakly inhibits alpha-9-alpha-10/CHRNA9-CHRNA10 nAChRs (IC(50)=3 uM). This chain is Alpha-conotoxin Lt28.1, found in Conus litteratus (Lettered cone).